Consider the following 340-residue polypeptide: Guanine nucleotide-binding protein G(I)/G(S)/G(T) subunit beta-1 (340 aa).

7 WD repeats span residues 53–83 (GHLA…IIWD), 95–125 (LRSS…SIYN), 141–170 (GHTG…ALWD), 182–212 (GHTG…KLWD), 224–254 (GHES…RLFD), 268–298 (NIIC…NVWD), and 310–340 (GHDN…KIWN).

Belongs to the WD repeat G protein beta family. G proteins are composed of 3 units, alpha, beta and gamma.

Guanine nucleotide-binding proteins (G proteins) are involved as a modulator or transducer in various transmembrane signaling systems. The beta and gamma chains are required for the GTPase activity, for replacement of GDP by GTP, and for G protein-effector interaction. This is Guanine nucleotide-binding protein G(I)/G(S)/G(T) subunit beta-1 (gnb1) from Danio rerio (Zebrafish).